The following is a 200-amino-acid chain: High mobility group protein B3 (200 aa).

N6-acetyllysine is present on K3. 2 DNA-binding regions (HMG box) span residues 9-79 (PKGK…KDYG) and 93-161 (PKRP…ADYK). C23 carries the post-translational modification Cysteine sulfonic acid (-SO3H); alternate. An intrachain disulfide couples C23 to C45. N6-acetyllysine occurs at positions 30 and 43. C45 is modified (cysteine sulfonic acid (-SO3H); alternate). The disordered stretch occupies residues 71 to 97 (YDREMKDYGPAKGGKKKKDPNAPKRPP). S98 carries the phosphoserine modification. The residue at position 104 (C104) is a Cysteine sulfonic acid (-SO3H). Residues K112 and K139 each carry the N6-acetyllysine modification. Positions 163–200 (KGKFDGAKGAAKVARKKVEEEDEEDEEEEEEEEEEEDE) are disordered. The span at 182–200 (EEDEEDEEEEEEEEEEEDE) shows a compositional bias: acidic residues.

The protein belongs to the HMGB family. Reduction/oxidation of cysteine residues Cys-23, Cys-45 and Cys-104 and a possible intramolecular disulfide bond involving Cys-23 and Cys-45 give rise to different redox forms with specific functional activities in various cellular compartments: 1- fully reduced HMGB3 (HMGB3C23hC45hC104h), 2- disulfide HMGB3 (HMGB3C23-C45C104h) and 3- sulfonyl HMGB3 (HMGB3C23soC45soC104so).

It localises to the nucleus. The protein localises to the chromosome. Its subcellular location is the cytoplasm. In terms of biological role, multifunctional protein with various roles in different cellular compartments. May act in a redox sensitive manner. Associates with chromatin and binds DNA with a preference for non-canonical DNA structures such as single-stranded DNA. Can bend DNA and enhance DNA flexibility by looping thus providing a mechanism to promote activities on various gene promoters. Proposed to be involved in the innate immune response to nucleic acids by acting as a cytoplasmic promiscuous immunogenic DNA/RNA sensor. Negatively regulates B-cell and myeloid cell differentiation. In hematopoietic stem cells may regulate the balance between self-renewal and differentiation. Involved in negative regulation of canonical Wnt signaling. This Bos taurus (Bovine) protein is High mobility group protein B3 (HMGB3).